Consider the following 166-residue polypeptide: Probable chemoreceptor glutamine deamidase CheD (166 aa).

This sequence belongs to the CheD family.

The enzyme catalyses L-glutaminyl-[protein] + H2O = L-glutamyl-[protein] + NH4(+). Functionally, probably deamidates glutamine residues to glutamate on methyl-accepting chemotaxis receptors (MCPs), playing an important role in chemotaxis. This is Probable chemoreceptor glutamine deamidase CheD from Desulforamulus reducens (strain ATCC BAA-1160 / DSM 100696 / MI-1) (Desulfotomaculum reducens).